We begin with the raw amino-acid sequence, 254 residues long: Coenzyme F420:L-glutamate ligase (254 aa).

GTP-binding positions include isoleucine 11–isoleucine 14, serine 40–threonine 41, and lysine 45. Residue aspartate 109 participates in a divalent metal cation binding. A GTP-binding site is contributed by asparagine 112. Aspartate 150, threonine 151, and glutamate 208 together coordinate a divalent metal cation. Methionine 206–isoleucine 213 is a binding site for GTP.

It belongs to the CofE family. In terms of assembly, homodimer. Mg(2+) serves as cofactor. It depends on Mn(2+) as a cofactor. Requires K(+) as cofactor.

The enzyme catalyses oxidized coenzyme F420-0 + GTP + L-glutamate = oxidized coenzyme F420-1 + GDP + phosphate + H(+). It catalyses the reaction oxidized coenzyme F420-1 + GTP + L-glutamate = oxidized coenzyme F420-2 + GDP + phosphate + H(+). It participates in cofactor biosynthesis; coenzyme F420 biosynthesis. Its function is as follows. Catalyzes the GTP-dependent successive addition of two or more gamma-linked L-glutamates to the L-lactyl phosphodiester of 7,8-didemethyl-8-hydroxy-5-deazariboflavin (F420-0) to form coenzyme F420-0-glutamyl-glutamate (F420-2) or polyglutamated F420 derivatives. The polypeptide is Coenzyme F420:L-glutamate ligase (Methanosarcina mazei (strain ATCC BAA-159 / DSM 3647 / Goe1 / Go1 / JCM 11833 / OCM 88) (Methanosarcina frisia)).